The chain runs to 145 residues: uncharacterized protein (145 aa).

Belongs to the SAP18 family.

The protein localises to the cytoplasm. Its subcellular location is the nucleus. This is an uncharacterized protein from Schizosaccharomyces pombe (strain 972 / ATCC 24843) (Fission yeast).